The chain runs to 84 residues: Cell division topological specificity factor (84 aa).

The protein belongs to the MinE family.

Prevents the cell division inhibition by proteins MinC and MinD at internal division sites while permitting inhibition at polar sites. This ensures cell division at the proper site by restricting the formation of a division septum at the midpoint of the long axis of the cell. This chain is Cell division topological specificity factor, found in Pseudomonas putida (strain W619).